A 397-amino-acid polypeptide reads, in one-letter code: Thioredoxin-interacting protein (397 aa).

Residue Lys-213 forms a Glycyl lysine isopeptide (Lys-Gly) (interchain with G-Cter in ubiquitin) linkage. At Ser-362 the chain carries Phosphoserine.

It belongs to the arrestin family. In terms of assembly, homodimer; disulfide-linked. Interacts with TXN/thioredoxin through its redox-active site. Interacts with transcriptional repressors ZBTB16, ZBTB32 and HDAC1. Interacts with DDIT4. Post-translationally, ubiquitinated; undergoes heterotypic 'Lys-48'-/'Lys-63'-branched polyubiquitination catalyzed by ITCH and UBR5 resulting in proteasomal degradation. Deubiquitinated by USP5, leading to TXNIP stabilization. As to expression, ubiquitously expressed.

The protein resides in the cytoplasm. Its function is as follows. May act as an oxidative stress mediator by inhibiting thioredoxin activity or by limiting its bioavailability. Interacts with COPS5 and restores COPS5-induced suppression of CDKN1B stability, blocking the COPS5-mediated translocation of CDKN1B from the nucleus to the cytoplasm. Functions as a transcriptional repressor, possibly by acting as a bridge molecule between transcription factors and corepressor complexes, and over-expression will induce G0/G1 cell cycle arrest. Required for the maturation of natural killer cells. Acts as a suppressor of tumor cell growth. Inhibits the proteasomal degradation of DDIT4, and thereby contributes to the inhibition of the mammalian target of rapamycin complex 1 (mTORC1). The polypeptide is Thioredoxin-interacting protein (Txnip) (Mus musculus (Mouse)).